The following is a 126-amino-acid chain: Pancreatic polypeptide prohormone (126 aa).

A signal peptide spans M1–G26. The residue at position 62 (Y62) is a Tyrosine amide. A disordered region spans residues R77 to S126.

Belongs to the NPY family. In terms of processing, no icosapeptide-like peptide is cleaved from the C-terminal.

The protein localises to the secreted. Functionally, hormone secreted by pancreatic cells that acts as a regulator of pancreatic and gastrointestinal functions probably by signaling through the G protein-coupled receptor NPY4R2. This is Pancreatic polypeptide prohormone (PPY) from Cavia porcellus (Guinea pig).